Here is an 895-residue protein sequence, read N- to C-terminus: ABC-transporter-regulating transcription factor (895 aa).

Positions 69 to 96 form a DNA-binding region, zn(2)-C6 fungal-type; it reads CDMCRKKKIKCDGKMPKCSHCTNYKTDC. Residues 156-218 are disordered; that stretch reads HASGSNTPHN…QKESETEVEG (63 aa). Over residues 158-207 the composition is skewed to polar residues; that stretch reads SGSNTPHNPQKINIPSQSQIAMSQQNSSSHYSTPRLESQSSPRTAATSPE. The helical transmembrane segment at 648–668 threads the bilayer; that stretch reads CVWLILYYPVSALVTLFANIL. The tract at residues 726–813 is disordered; that stretch reads ESYSKKKRKS…TGVSTNIPPN (88 aa). A compositionally biased stretch (low complexity) spans 755 to 765; that stretch reads PSTTQPTQAPS.

In terms of assembly, interacts with ncaA.

Its subcellular location is the nucleus. It localises to the membrane. Functionally, transcription factor that regulates expression of the genes related to ergosterol biosynthesis, including erg3B, erg24A, erg25A, as well as cyp51A that encodes a target protein of azoles. In coordination with ffmA and ncaA, is responsible for the expression of the ABC transporter abcC/cdr1B/abcG1 related to azole resistance. Directly binds both the cyp51A and abcC/cdr1B/abcG1 promoters at a conserved 34 bp region called the atrR response element (ATRE). AtrR also binds to the promoter regions of both the sterol response transcription factor srbA and atrR genes themselves, the latter suggesting the possibility that atrR is autoregulated. Also regulates iron uptake, most likely via cooperation with SrbA. AtrR is necessary for hypoxia adaptation and virulence. This is ABC-transporter-regulating transcription factor from Aspergillus fumigatus (strain ATCC MYA-4609 / CBS 101355 / FGSC A1100 / Af293) (Neosartorya fumigata).